A 109-amino-acid polypeptide reads, in one-letter code: Cell division protein ZapA (109 aa).

Positions 22 to 99 form a coiled coil; it reads EQQDALNMAA…IEQALLEQGR (78 aa).

This sequence belongs to the ZapA family. Type 1 subfamily. In terms of assembly, homodimer. Interacts with FtsZ.

The protein resides in the cytoplasm. In terms of biological role, activator of cell division through the inhibition of FtsZ GTPase activity, therefore promoting FtsZ assembly into bundles of protofilaments necessary for the formation of the division Z ring. It is recruited early at mid-cell but it is not essential for cell division. The chain is Cell division protein ZapA from Yersinia pseudotuberculosis serotype O:1b (strain IP 31758).